The primary structure comprises 262 residues: Sulfur carrier protein FdhD (262 aa).

C107 acts as the Cysteine persulfide intermediate in catalysis.

Belongs to the FdhD family.

It is found in the cytoplasm. Required for formate dehydrogenase (FDH) activity. Acts as a sulfur carrier protein that transfers sulfur from IscS to the molybdenum cofactor prior to its insertion into FDH. This Bacillus pumilus (strain SAFR-032) protein is Sulfur carrier protein FdhD.